The sequence spans 362 residues: Acyl-CoA-binding domain-containing protein 3 (362 aa).

The signal sequence occupies residues 1–22 (MEVFLEMLLTAVVALLFSFLLA). 2 disordered regions span residues 132 to 151 (QDEQ…SPEN) and 193 to 214 (VEKS…EKTE). Residues 192–221 (RVEKSSNMVEESDAEAENEEKTELTIEEDD) adopt a coiled-coil conformation. Residues 231-318 (LEKAFAAAVN…VSKEIPGLTK (88 aa)) form the ACB domain. An acyl-CoA contacts are provided by residues 260–264 (FGLHK), K286, and Y305. Residues 329–362 (METSVGLPPNSGSLEDPTNLVTTGVDESSKNGIP) form a disordered region.

The protein belongs to the ACBP family. In terms of tissue distribution, expressed in roots, stems, leaves, flowers and siliques.

Its subcellular location is the secreted. It localises to the extracellular space. In terms of biological role, binds medium- and long-chain acyl-CoA esters with very high affinity. Can interact in vitro with arachidonyl-CoA, barely with oleoyl-CoA, but not with palmitoyl-CoA. This is Acyl-CoA-binding domain-containing protein 3 (ACBP3) from Arabidopsis thaliana (Mouse-ear cress).